The primary structure comprises 335 residues: UPF0284 protein TK0853 (335 aa).

The protein belongs to the UPF0284 family.

In Thermococcus kodakarensis (strain ATCC BAA-918 / JCM 12380 / KOD1) (Pyrococcus kodakaraensis (strain KOD1)), this protein is UPF0284 protein TK0853.